Reading from the N-terminus, the 500-residue chain is Lysine--tRNA ligase (500 aa).

Residues Glu410 and Glu417 each contribute to the Mg(2+) site.

Belongs to the class-II aminoacyl-tRNA synthetase family. As to quaternary structure, homodimer. Mg(2+) serves as cofactor.

It is found in the cytoplasm. It catalyses the reaction tRNA(Lys) + L-lysine + ATP = L-lysyl-tRNA(Lys) + AMP + diphosphate. This Pseudomonas putida (strain ATCC 700007 / DSM 6899 / JCM 31910 / BCRC 17059 / LMG 24140 / F1) protein is Lysine--tRNA ligase.